The sequence spans 440 residues: Acyltransferase Pun1 (440 aa).

Residues H169 and D384 each act as proton acceptor in the active site.

It belongs to the plant acyltransferase family.

It carries out the reaction vanillylamine + (6E)-8-methylnon-6-enoyl-CoA = capsaicin + CoA + H(+). The enzyme catalyses (6E)-8-methylnon-6-enoyl-CoA + 4-hydroxy-3-methoxy-benzenemethanol = capsiate + CoA. Involved in the biosynthesis of capsaicinoids and capsinoids natural products, pungent alkaloids synthesized from phenylpropanoid intermediates in the placental tissue of chili pepper fruit acting as repellant on herbivorous mammals and conferring spiciness to hot peppers. Catalyzes the biosynthesis of capsaicin, a pungent component, and of capsiate, a non-pungent component, from vanillylamine and vanillyl alcohol, respectively. Can transfer an acyl from 8-methylnon-6-enoyl-CoA to vanillylamine forming capsaicin and CoA. This Capsicum frutescens (Cayenne pepper) protein is Acyltransferase Pun1.